Consider the following 275-residue polypeptide: Formamidopyrimidine-DNA glycosylase (275 aa).

The Schiff-base intermediate with DNA role is filled by Pro2. The active-site Proton donor is the Glu3. Lys58 (proton donor; for beta-elimination activity) is an active-site residue. DNA is bound by residues His93, Arg111, and Arg156. The FPG-type zinc finger occupies 241–275 (FVYDRAGQPCRVCGTPVRQIVQGQRSTYFCPTCQR). Arg265 serves as the catalytic Proton donor; for delta-elimination activity.

This sequence belongs to the FPG family. As to quaternary structure, monomer. Zn(2+) is required as a cofactor.

It carries out the reaction Hydrolysis of DNA containing ring-opened 7-methylguanine residues, releasing 2,6-diamino-4-hydroxy-5-(N-methyl)formamidopyrimidine.. The enzyme catalyses 2'-deoxyribonucleotide-(2'-deoxyribose 5'-phosphate)-2'-deoxyribonucleotide-DNA = a 3'-end 2'-deoxyribonucleotide-(2,3-dehydro-2,3-deoxyribose 5'-phosphate)-DNA + a 5'-end 5'-phospho-2'-deoxyribonucleoside-DNA + H(+). Involved in base excision repair of DNA damaged by oxidation or by mutagenic agents. Acts as a DNA glycosylase that recognizes and removes damaged bases. Has a preference for oxidized purines, such as 7,8-dihydro-8-oxoguanine (8-oxoG). Has AP (apurinic/apyrimidinic) lyase activity and introduces nicks in the DNA strand. Cleaves the DNA backbone by beta-delta elimination to generate a single-strand break at the site of the removed base with both 3'- and 5'-phosphates. This is Formamidopyrimidine-DNA glycosylase from Burkholderia cenocepacia (strain HI2424).